The primary structure comprises 149 residues: Proline-rich acidic protein 1 (149 aa).

Positions 1-20 (MKRFLLATCLVAALLWEAGA) are cleaved as a signal peptide. 2 disordered regions span residues 51–79 (EPLEKDNQLGPLLPEPKQKPAAAEEKRPD) and 97–122 (LQGPELDLDSIDHPMSDDVQDEEVPQ). Residues 66–79 (PKQKPAAAEEKRPD) show a composition bias toward basic and acidic residues.

As to quaternary structure, interacts with MTTP. Interacts with MAD1L1. As to expression, predominantly expressed in the intestinal epithelial cells than in the liver (at protein level). Abundantly expressed in the uterus during late pregnancy by uterus epithelial cells. After birth expression rapidly decreases and is no longer found in the uterus by the third day. Also highly expressed in the small intestine where it shows a proximal-distal graded expression.

It localises to the secreted. The protein localises to the endoplasmic reticulum. In terms of biological role, lipid-binding protein which promotes lipid absorption by facilitating MTTP-mediated lipid transfer (mainly triglycerides and phospholipids) and MTTP-mediated apoB lipoprotein assembly and secretion. Protects the gastrointestinal epithelium from irradiation-induced apoptosis. May play an important role in maintaining normal growth homeostasis in epithelial cells. Involved in p53/TP53-dependent cell survival after DNA damage. The polypeptide is Proline-rich acidic protein 1 (Prap1) (Mus musculus (Mouse)).